The sequence spans 355 residues: MSAYCGKYKDELIKNAAYIGTPGKGILAADESTGTIGKRLSSINVENVEENRRALRELLFCCPGALQYISGVILFEETLYQKTKDGKPFVDVLKEGGVLPGIKVDKGTIEVVGTDKETTTQGHDDLGKRCAKYYEAGARFAKWRAVLKIGPNEPSQLAIDLNAQGLARYAIICQENGLVPIVEPEILVDGPHDIDRCAYVTETVLAACYKALNEHHVLLEGTLLKPNMVTPGSDSKKVTPEVIAEYTVRTLQRTVPAAVPAVLFLSGGQSEEEATRNLNAMNKLSTKKPWSLSFSFGRALQASTLKAWAGKVENLEKARAAFLARCKANSEATLGTYKGDAAADTESLHVKDYKY.

Substrate-binding residues include R52 and K142. The active-site Proton acceptor is E183. K225 (schiff-base intermediate with dihydroxyacetone-P) is an active-site residue.

Belongs to the class I fructose-bisphosphate aldolase family.

The protein resides in the cytoplasm. The enzyme catalyses beta-D-fructose 1,6-bisphosphate = D-glyceraldehyde 3-phosphate + dihydroxyacetone phosphate. The protein operates within carbohydrate degradation; glycolysis; D-glyceraldehyde 3-phosphate and glycerone phosphate from D-glucose: step 4/4. The polypeptide is Fructose-bisphosphate aldolase, cytoplasmic isozyme (Zea mays (Maize)).